Here is a 64-residue protein sequence, read N- to C-terminus: UPF0434 protein TERTU_2813 (64 aa).

This sequence belongs to the UPF0434 family.

The sequence is that of UPF0434 protein TERTU_2813 from Teredinibacter turnerae (strain ATCC 39867 / T7901).